A 77-amino-acid chain; its full sequence is MKVKVFRVHGYFEKNGRKFKFTKEYRGIKEEDVKELVYSDIGSKHKVKRNKIFIKEIKEIRPEEAEDIVVRRLSLEL.

This sequence belongs to the eukaryotic ribosomal protein eL20 family. In terms of assembly, part of the 50S ribosomal subunit. Binds 23S rRNA.

In Pyrococcus furiosus (strain ATCC 43587 / DSM 3638 / JCM 8422 / Vc1), this protein is Large ribosomal subunit protein eL20.